A 545-amino-acid polypeptide reads, in one-letter code: Chaperonin GroEL (545 aa).

ATP is bound by residues 29-32 (TLGP), Lys-50, 86-90 (DGTTT), Gly-413, 479-481 (NAA), and Asp-496. The disordered stretch occupies residues 525–545 (KPEKEKAPAAAGAPDMGGMDF). A compositionally biased stretch (low complexity) spans 532 to 545 (PAAAGAPDMGGMDF).

Belongs to the chaperonin (HSP60) family. As to quaternary structure, forms a cylinder of 14 subunits composed of two heptameric rings stacked back-to-back. Interacts with the co-chaperonin GroES.

The protein localises to the cytoplasm. The catalysed reaction is ATP + H2O + a folded polypeptide = ADP + phosphate + an unfolded polypeptide.. In terms of biological role, together with its co-chaperonin GroES, plays an essential role in assisting protein folding. The GroEL-GroES system forms a nano-cage that allows encapsulation of the non-native substrate proteins and provides a physical environment optimized to promote and accelerate protein folding. This is Chaperonin GroEL from Deinococcus geothermalis (strain DSM 11300 / CIP 105573 / AG-3a).